The primary structure comprises 239 residues: MEFFNILQSACNDVNLDFNDKKYNQLISYKNLIQEWNKKINLTAIVEDDEIIKKHFIDCIKIFKSSPIGEAKSLIDIGTGAGFPGIPIKILKEDIEITLLDSLQKRINFLNIVIGELQLKNIQCLHGRAEDYAQEIQHRQKYDIAVSRAVANLAVLSEFCIPFVEKGGYFIAMKGPSVEEEITAATKSIEILGGKIEDIIKIDIEDTDLKHNLVIIKKVKETGKRYPRKPGIIKKNPLK.

S-adenosyl-L-methionine-binding positions include Gly78, Phe83, 129–130 (AE), and Arg148.

The protein belongs to the methyltransferase superfamily. RNA methyltransferase RsmG family.

Its subcellular location is the cytoplasm. Its function is as follows. Specifically methylates the N7 position of a guanine in 16S rRNA. The protein is Ribosomal RNA small subunit methyltransferase G of Clostridium botulinum (strain Okra / Type B1).